A 154-amino-acid chain; its full sequence is Protein X (154 aa).

The mitochondrial targeting sequence stretch occupies residues 68 to 117 (PCALRFTSARRMETTVNAHRNLPKVLHKRTLGLSAMSTTDLEAYFKDCVF).

It belongs to the orthohepadnavirus protein X family. May form homodimer. May interact with host CEBPA, CFLAR, CREB1, DDB1, E4F1, HBXIP, HSPD1/HSP60, NFKBIA, POLR2E and SMAD4. Interacts with host SMC5-SMC6 complex and induces its degradation. Interacts with host TRPC4AP; leading to prevent ubiquitination of TRPC4AP. Interacts with host PLSCR1; this interaction promotes ubiquitination and degradation of HBx and impairs HBx-mediated cell proliferation. A fraction may be phosphorylated in insect cells and HepG2 cells, a human hepatoblastoma cell line. Phosphorylated in vitro by host protein kinase C or mitogen-activated protein kinase. N-acetylated in insect cells.

The protein resides in the host cytoplasm. Its subcellular location is the host nucleus. The protein localises to the host mitochondrion. Functionally, multifunctional protein that plays a role in silencing host antiviral defenses and promoting viral transcription. Does not seem to be essential for HBV infection. May be directly involved in development of cirrhosis and liver cancer (hepatocellular carcinoma). Most of cytosolic activities involve modulation of cytosolic calcium. The effect on apoptosis is controversial depending on the cell types in which the studies have been conducted. May induce apoptosis by localizing in mitochondria and causing loss of mitochondrial membrane potential. May also modulate apoptosis by binding host CFLAR, a key regulator of the death-inducing signaling complex (DISC). Promotes viral transcription by using the host E3 ubiquitin ligase DDB1 to target the SMC5-SMC6 complex to proteasomal degradation. This host complex would otherwise bind to viral episomal DNA, and prevents its transcription. Moderately stimulates transcription of many different viral and cellular transcription elements. Promoters and enhancers stimulated by HBx contain DNA binding sites for NF-kappa-B, AP-1, AP-2, c-EBP, ATF/CREB, or the calcium-activated factor NF-AT. The protein is Protein X of Homo sapiens (Human).